The following is a 735-amino-acid chain: Cyclic nucleotide-gated channel cone photoreceptor subunit alpha (735 aa).

The Cytoplasmic segment spans residues 1–214; sequence MAKINTQHSY…PSSNMYYNWL (214 aa). Residues 142-191 are disordered; it reads VNFSNNTNEDKKEEKKEVKEEKKEEKKEEKKEEKKDDKKDDKKDDKKDDK. Over residues 149–191 the composition is skewed to basic and acidic residues; the sequence is NEDKKEEKKEVKEEKKEEKKEEKKEEKKDDKKDDKKDDKKDDK. A helical transmembrane segment spans residues 215 to 236; it reads TIIAAPVFYNWCMLICRACFDE. Over 237 to 246 the chain is Extracellular; it reads LQIDHIKLWL. The helical transmembrane segment at 247–267 threads the bilayer; that stretch reads FLDYCSDIIYVFDMFVRFRTG. Residues 268 to 292 lie on the Cytoplasmic side of the membrane; the sequence is FLEQGLLVKDEKKLRDHYTQTVQFK. The chain crosses the membrane as a helical span at residues 293-311; the sequence is LDVLSLLPTDLAYLKLGLN. The Extracellular portion of the chain corresponds to 312–316; sequence YPELR. The chain crosses the membrane as a helical span at residues 317–335; that stretch reads FNRLLRIARLFEFFDRTET. The Cytoplasmic portion of the chain corresponds to 336-342; the sequence is RTNYPNM. Residues 343 to 366 form a helical membrane-spanning segment; it reads FRIGNLVLYILIIIHWNACIYFAI. Residues 367-389 are Extracellular-facing; it reads SKVIGFGTDSWVYPNVSIPEYGR. 2 helical membrane passes run 390 to 424 and 425 to 449; these read LSRKYIYSLYWSTLTLTTIGETPPPVKDEEYLFVV and IDFLVGVLIFATIVGNVGSMISNMN. Topologically, residues 450–735 are cytoplasmic; it reads ASRAEFQAKV…PEKPEEQKKD (286 aa). Residues 532–654, Glu-591, and Arg-606 contribute to the 3',5'-cyclic GMP site; that span reads LLIE…DNLI. Residues 715–735 form a disordered region; the sequence is GSGSLSVGEPEPEKPEEQKKD. The span at 725–735 shows a compositional bias: basic and acidic residues; that stretch reads EPEKPEEQKKD.

This sequence belongs to the cyclic nucleotide-gated cation channel (TC 1.A.1.5) family.

The protein resides in the membrane. Functionally, visual signal transduction is mediated by a G-protein coupled cascade using cGMP as second messenger. This protein can be activated by cyclic GMP which leads to an opening of the cation channel and thereby causing a depolarization of cone photoreceptors. This is Cyclic nucleotide-gated channel cone photoreceptor subunit alpha from Gallus gallus (Chicken).